A 484-amino-acid chain; its full sequence is Oxysterol-binding protein-related protein 2 (484 aa).

Phosphoserine is present on residues Ser-19 and Ser-20. The disordered stretch occupies residues 35-61; the sequence is DLDTSKSTRSGKNGEKPQQENGIQKHR. A 1,2-diacyl-sn-glycero-3-phospho-(1D-myo-inositol-4,5-bisphosphate) contacts are provided by residues Lys-90 and 178-179; that span reads HH. 2 stretches are compositionally biased toward basic and acidic residues: residues 319–340 and 424–450; these read KQEK…EKAN and SQEK…EWRT. Disordered stretches follow at residues 319–348 and 423–454; these read KQEK…GDVA and ASQE…RWFS. An a 1,2-diacyl-sn-glycero-3-phospho-(1D-myo-inositol-4,5-bisphosphate)-binding site is contributed by 431–435; the sequence is EEKQR.

It belongs to the OSBP family. In terms of assembly, monomer. Homotetramer; phosphatidylinositol-4,5-bisphosphate binding promotes formation of stable tetramers. Interacts with DIAPH1. Detected in cochlea, in inner and outer hair cells in the organ of Corti (at protein level).

Its subcellular location is the cytoplasm. The protein localises to the cytosol. It is found in the lipid droplet. The protein resides in the cell membrane. Intracellular transport protein that binds sterols and phospholipids and mediates lipid transport between intracellular compartments. Increases plasma membrane cholesterol levels and decreases phosphatidylinositol-4,5-bisphosphate levels in the cell membrane. Binds phosphoinositides, such as phosphatidylinositol-4,5-bisphosphate. Exhibits strong binding to phosphatidic acid and weak binding to phosphatidylinositol 3-phosphate. Binds cholesterol, dehydroergosterol, 22(R)-hydroxycholesterol and 25-hydroxycholesterol (in vitro). This chain is Oxysterol-binding protein-related protein 2 (Osbpl2), found in Mus musculus (Mouse).